The primary structure comprises 669 residues: DNA ligase (669 aa).

Position 35–39 (35–39) interacts with NAD(+); the sequence is DFEYD. Positions 52-71 are disordered; the sequence is YPEWDSPDSPTHRVGSDKTE. Residues 61–71 show a composition bias toward basic and acidic residues; sequence PTHRVGSDKTE. Residues 84 to 85 and Glu115 each bind NAD(+); that span reads SL. Lys117 (N6-AMP-lysine intermediate) is an active-site residue. NAD(+)-binding residues include Arg138, Glu175, Lys290, and Lys314. Zn(2+)-binding residues include Cys408, Cys411, Cys426, and Cys432. Residues 590-669 enclose the BRCT domain; it reads AVSNRLAGKT…EEEFLRLIEE (80 aa).

This sequence belongs to the NAD-dependent DNA ligase family. LigA subfamily. Mg(2+) is required as a cofactor. The cofactor is Mn(2+).

It carries out the reaction NAD(+) + (deoxyribonucleotide)n-3'-hydroxyl + 5'-phospho-(deoxyribonucleotide)m = (deoxyribonucleotide)n+m + AMP + beta-nicotinamide D-nucleotide.. Functionally, DNA ligase that catalyzes the formation of phosphodiester linkages between 5'-phosphoryl and 3'-hydroxyl groups in double-stranded DNA using NAD as a coenzyme and as the energy source for the reaction. It is essential for DNA replication and repair of damaged DNA. In Porphyromonas gingivalis (strain ATCC BAA-308 / W83), this protein is DNA ligase.